Here is a 239-residue protein sequence, read N- to C-terminus: Serine protease SplD (239 aa).

The signal sequence occupies residues M1–A36. Active-site charge relay system residues include H75, D114, and S192.

Belongs to the peptidase S1B family.

It localises to the secreted. This is Serine protease SplD (splD) from Staphylococcus aureus (strain COL).